A 192-amino-acid chain; its full sequence is Probable GTP-binding protein EngB (192 aa).

The EngB-type G domain maps to Asn-22–Ala-192. GTP-binding positions include Gly-30–Ser-37, Gly-57–Gly-61, Asp-75–Gly-78, Thr-142–Asp-145, and Phe-173–Ala-175. Residues Ser-37 and Thr-59 each contribute to the Mg(2+) site.

This sequence belongs to the TRAFAC class TrmE-Era-EngA-EngB-Septin-like GTPase superfamily. EngB GTPase family. Requires Mg(2+) as cofactor.

Functionally, necessary for normal cell division and for the maintenance of normal septation. The protein is Probable GTP-binding protein EngB of Thermoanaerobacter pseudethanolicus (strain ATCC 33223 / 39E) (Clostridium thermohydrosulfuricum).